Here is a 1714-residue protein sequence, read N- to C-terminus: MANSSAGSAADHRNKHLSVNPPHQIFKDIQGSDNAIPLSPQWLLSKPGENKTGMGTGDPNQYGNHSDVVRTTGNGEETLDNLKKKDVFRPSLLDAESGRRDRWRDEERDTLSSVRNDRWRNGDKDSGDNKKVDRWDNVAPKFGEQRRGPNDRWTDSGNKDAAPEQRRESKWNSRWGPDDKEAEIPRNKWDEPGKDGEIIREKGPSLPTSDGDHYRPWRPSQGRGRGEALHNQSTPNKQVTSFSHSRGRGENTAIFSAGRGRMSPGGSIFTSAPNQSHPPGSASDKGESGPGEPPHLRYSRMKLLDVYRMADTECYEKFPDGFIEVPSLTSEEPTDPLALCAPSSDEVNVLDAIEKGKIVSSGAPQTSKDGPTGRNPVEFSQPRRIRPAGSREDMTFGAEESKDESGETRNYPDDKFRPEASHEGYAPFRRGNEAPVRELKEPSMQGNAHVQSASPWRQSSGGERSNRNSHDWNDPSADSRLKSSDSVWSHPKDSINHLGGNNMMLPQSKGESRWQISEDPSLRRQPSLVFDREQEVRKLLPSSPEELSLYYKDPQGLIQGPFSGSDIIGWFEAGYFGIDLLVRLASAPNDSPFSLLGDVMPHLRAKSGPPPGFTGAKQNEFVDAAGTSAFPGVGKVHSGMGETDMLQNDMRYKHVAGTVAENRFIESLMSGGLTNSAQGVQGYGVNSSGGLSLPVTDGGADMYLLAKKLELERQRSIPSPYSYWPGRESANLMPGSENVSENAQQPTRSPSSDLLSILQGVTDRSSPAVSGPLPAWSQPIQKESDLHHAKTFQTQIPFGVQQQRLPEQNLPLSGLLGQPMENNPGGMLSPDMMLAAGLSQEHQSLNLLQQQQLLLQLNAQTPLSAQHQRLLVEKMLLLKHQHKQEEQQQLLRQQQQLYSQVFADQQRSQQRFGDPSYGQLQASLDALRLQPSKDMSQVNQQVQVPVSHEERGINLADLLPVTHATNQTVASFETPSLHLQNQLFGNVDPRMVLPDQIDDTHKKESKSEYERTVSADYVNSLYSEKPVLSPGYHATHNVEEPVSYPNNESSTATMTAPEIVESKLLEEQSKDMYAGKGEVSIELSGETPATEVKNNDVSVARKTSEKKSRKQRAKQAADLAKSTSRAPLQETKKPQPGSADDSEIKGKTKKSADTLIDNDTHLIKSSTATASNTSQMSSEVDSVRGEESSLQNTRTQPGRAWKPAPGFKPKSLLEIQMEEQRVAQAEALAPKISSTVNSVGSAAPWAGIVTNSDSNILRETHGESAITQTGVVKPESVPTLKAKKSHLHDLLADDVFAKSSDKEREVMEIISNNDAFMQVTTTNAESFDDDNFIDARETKKSRKKSARAKTSGAKIAAHVPAVDTSLQTNSVEKGKSSRILQQQEKEVLPAIPSGPSLGDFVLWKGESVNNPPPAAAWSSGPKKSTKPSSLRDIVKEQEKMTTSSHPPPSPVPTTQKAIPPQAHQGGASWSRSASSPSQAVSQSSSQSKSKGDDDLFWGPVEQSTQDTKQGDFPHLTSQNSWGTKNTPGKVNAGTSLNRQKSVSMGSADRVLSSPVVTQASHKGKKEAVTKLTEANGFRDWCKSECLRLLGSEDTSVLEFCLKLSRSEAETLLIENLGSRDPDHKFIDKFLNYKDLLPSEVVEIAFQSKGSGVGTRNNTGEDYYYNTTAANDGFSKVGGKKKAKKGKKVSLSASVLGFNVVSNRIMMGEIQTIED.

Disordered stretches follow at residues 1–296 (MANS…PPHL) and 358–511 (IVSS…SKGE). Serine 39 is modified (phosphoserine). Residues 58-75 (DPNQYGNHSDVVRTTGNG) are compositionally biased toward polar residues. Composition is skewed to basic and acidic residues over residues 96–136 (ESGR…DRWD) and 143–203 (GEQR…REKG). 2 stretches are compositionally biased toward polar residues: residues 230 to 244 (HNQS…SFSH) and 268 to 278 (IFTSAPNQSHP). Composition is skewed to basic and acidic residues over residues 389 to 422 (GSRE…EASH) and 430 to 441 (RGNEAPVRELKE). The segment covering 444-463 (MQGNAHVQSASPWRQSSGGE) has biased composition (polar residues). A compositionally biased stretch (basic and acidic residues) spans 464-483 (RSNRNSHDWNDPSADSRLKS). The 52-residue stretch at 546-597 (ELSLYYKDPQGLIQGPFSGSDIIGWFEAGYFGIDLLVRLASAPNDSPFSLLG) folds into the GYF domain. 3 disordered regions span residues 728 to 753 (ESAN…PSSD), 1092 to 1205 (VKNN…KPAP), and 1437 to 1566 (QEKM…GKKE). A compositionally biased stretch (polar residues) spans 737 to 753 (ENVSENAQQPTRSPSSD). Residues 1142–1162 (SEIKGKTKKSADTLIDNDTHL) are compositionally biased toward basic and acidic residues. The segment covering 1163 to 1180 (IKSSTATASNTSQMSSEV) has biased composition (polar residues). Over residues 1467–1488 (ASWSRSASSPSQAVSQSSSQSK) the composition is skewed to low complexity. Residues 1515-1544 (LTSQNSWGTKNTPGKVNAGTSLNRQKSVSM) show a composition bias toward polar residues.

As to quaternary structure, associates with eIF4E initiation factors and the ribosome complex, thus likely contributing to the proper translation of target proteins. Interacts directly with RPL18B and eIF4E1. Binds to SMG7. Post-translationally, quickly phosphorylated at Ser-39 after treatment of seedlings with the pathogen-associated molecular pattern (PAMP) flg22. Expressed in all tissues, mostly in flowers, leaves and stems, and, to a lower extent, in roots (at protein level).

Its subcellular location is the cytoplasm. The protein resides in the cytosol. It localises to the P-body. Its function is as follows. Translational repressor involved in the negative regulation of immune receptor accumulation via the inhibition of nucleotide-binding leucine-rich repeat (NLR) receptor mediated defense. Represses NLR protein accumulation (e.g. SNC1, RPS4, RPM1 and RPS2). Together with SMG7, helps to restrict effector-triggered immunity (ETI) cell death induction during pathogen infection in a salicylic acid- (SA) and reactive oxygen species- (ROS) independent manner. Required for pathogen-associated molecular pattern (PAMP)-induced suppression of necrotrophic fungal (e.g. F.moniliforme) pathogen-derived mycotoxin-triggered (e.g. fumonisin B1) cell death. Functionally, (Microbial infection) Required for early steps of plantago asiatica mosaic virus (PlAMV, genus Potexvirus) infection. Facilitates pathogenic growth of avirulent hemi-biotrophic bacteria P.syringae pv. tomato (Pst) DC3000 (e.g. AvrRps4 and AvrRpm1) and of the compatible oomycete H.arabidopsidis Noco2. The chain is Protein ESSENTIAL FOR POTEXVIRUS ACCUMULATION 1 from Arabidopsis thaliana (Mouse-ear cress).